Here is a 602-residue protein sequence, read N- to C-terminus: Type II restriction enzyme StsI (602 aa).

The catalysed reaction is Endonucleolytic cleavage of DNA to give specific double-stranded fragments with terminal 5'-phosphates.. An S subtype restriction enzyme that recognizes the double-stranded sequences 5'-GGATG-3' and 3'-CATCC-5' and cleaves respectively 15 bases after G-1 and 14 bases before C-1. In Streptococcus sanguinis, this protein is Type II restriction enzyme StsI (stsIR).